A 446-amino-acid polypeptide reads, in one-letter code: Probable glycine dehydrogenase (decarboxylating) subunit 1 (446 aa).

The protein belongs to the GcvP family. N-terminal subunit subfamily. In terms of assembly, the glycine cleavage system is composed of four proteins: P, T, L and H. In this organism, the P 'protein' is a heterodimer of two subunits.

It carries out the reaction N(6)-[(R)-lipoyl]-L-lysyl-[glycine-cleavage complex H protein] + glycine + H(+) = N(6)-[(R)-S(8)-aminomethyldihydrolipoyl]-L-lysyl-[glycine-cleavage complex H protein] + CO2. Functionally, the glycine cleavage system catalyzes the degradation of glycine. The P protein binds the alpha-amino group of glycine through its pyridoxal phosphate cofactor; CO(2) is released and the remaining methylamine moiety is then transferred to the lipoamide cofactor of the H protein. This chain is Probable glycine dehydrogenase (decarboxylating) subunit 1, found in Methylocella silvestris (strain DSM 15510 / CIP 108128 / LMG 27833 / NCIMB 13906 / BL2).